The sequence spans 347 residues: NADH-ubiquinone oxidoreductase chain 2 (347 aa).

11 consecutive transmembrane segments (helical) span residues 1–21 (MNPMIFTSLLATIMLGTSIVL), 25–45 (HWFLTWLGFEMNMMAIIPVLM), 68–88 (MILVLAIIINLMYSGQWTIMI), 96–116 (MLITIALVMKLGLAPFHFWVP), 122–142 (VSLSSGLILLTWQKIAPLSLL), 145–165 (IFPSINTNLLLIMSLLSIMIG), 178–198 (IMAYSSIAHMGWMIAIMIYNP), 201–221 (SLLNLLIYIMMTSSMFMLLII), 239–259 (IVVSTMMVILLSLGGLPPLTG), 274–294 (SSVMLPSLMAILALLNLFFYM), and 326–346 (MMSLISMSMLALPLAPSLITL).

Belongs to the complex I subunit 2 family. Core subunit of respiratory chain NADH dehydrogenase (Complex I) which is composed of 45 different subunits. Interacts with TMEM242.

Its subcellular location is the mitochondrion inner membrane. The enzyme catalyses a ubiquinone + NADH + 5 H(+)(in) = a ubiquinol + NAD(+) + 4 H(+)(out). Its function is as follows. Core subunit of the mitochondrial membrane respiratory chain NADH dehydrogenase (Complex I) which catalyzes electron transfer from NADH through the respiratory chain, using ubiquinone as an electron acceptor. Essential for the catalytic activity and assembly of complex I. This Sylvisorex lunaris (Moon forest shrew) protein is NADH-ubiquinone oxidoreductase chain 2.